The chain runs to 441 residues: Phosphoglucosamine mutase (441 aa).

S100 serves as the catalytic Phosphoserine intermediate. 4 residues coordinate Mg(2+): S100, D239, D241, and D243. The residue at position 100 (S100) is a Phosphoserine.

This sequence belongs to the phosphohexose mutase family. Requires Mg(2+) as cofactor. In terms of processing, activated by phosphorylation.

The enzyme catalyses alpha-D-glucosamine 1-phosphate = D-glucosamine 6-phosphate. Catalyzes the conversion of glucosamine-6-phosphate to glucosamine-1-phosphate. The polypeptide is Phosphoglucosamine mutase (Ruthia magnifica subsp. Calyptogena magnifica).